Here is a 452-residue protein sequence, read N- to C-terminus: Tubulin beta-2 chain (452 aa).

GTP is bound by residues glutamine 11, glutamate 72, serine 141, glycine 145, threonine 146, glycine 147, asparagine 207, and asparagine 229. Glutamate 72 is a binding site for Mg(2+). Positions 414–452 are disordered; sequence AESNMNDPVAEYQQYQDATADDEEEYDDEAADDHHQYES. The segment covering 432 to 444 has biased composition (acidic residues); that stretch reads TADDEEEYDDEAA.

The protein belongs to the tubulin family. In terms of assembly, dimer of alpha and beta chains. A typical microtubule is a hollow water-filled tube with an outer diameter of 25 nm and an inner diameter of 15 nM. Alpha-beta heterodimers associate head-to-tail to form protofilaments running lengthwise along the microtubule wall with the beta-tubulin subunit facing the microtubule plus end conferring a structural polarity. Microtubules usually have 13 protofilaments but different protofilament numbers can be found in some organisms and specialized cells. It depends on Mg(2+) as a cofactor.

It localises to the cytoplasm. The protein localises to the cytoskeleton. Tubulin is the major constituent of microtubules, a cylinder consisting of laterally associated linear protofilaments composed of alpha- and beta-tubulin heterodimers. Microtubules grow by the addition of GTP-tubulin dimers to the microtubule end, where a stabilizing cap forms. Below the cap, tubulin dimers are in GDP-bound state, owing to GTPase activity of alpha-tubulin. The chain is Tubulin beta-2 chain (TUBB2) from Solanum tuberosum (Potato).